We begin with the raw amino-acid sequence, 223 residues long: Guanylate kinase (223 aa).

The interval 1 to 22 (MTADGGPDVRHGTRPEPSGDGR) is disordered. The span at 7 to 19 (PDVRHGTRPEPSG) shows a compositional bias: basic and acidic residues. The Guanylate kinase-like domain maps to 21–201 (GRVVVLSGPS…ACAELVSLLV (181 aa)). 28–35 (GPSAVGKS) contributes to the ATP binding site. The tract at residues 204 to 223 (APDRHDTSGRTGRQTTSHPD) is disordered. Positions 212–223 (GRTGRQTTSHPD) are enriched in polar residues.

It belongs to the guanylate kinase family.

It is found in the cytoplasm. It catalyses the reaction GMP + ATP = GDP + ADP. Functionally, essential for recycling GMP and indirectly, cGMP. This Mycolicibacterium paratuberculosis (strain ATCC BAA-968 / K-10) (Mycobacterium paratuberculosis) protein is Guanylate kinase.